The sequence spans 573 residues: Urease subunit alpha 1 (573 aa).

The region spanning 136-573 (GGIDTHVHFI…LPLAQRYFLF (438 aa)) is the Urease domain. Ni(2+) contacts are provided by His-141, His-143, and Lys-224. Lys-224 carries the post-translational modification N6-carboxylysine. His-226 contacts substrate. Residues His-253 and His-279 each coordinate Ni(2+). His-327 functions as the Proton donor in the catalytic mechanism. Asp-367 contributes to the Ni(2+) binding site.

The protein belongs to the metallo-dependent hydrolases superfamily. Urease alpha subunit family. May form a heterohexamer of 3 UreC (alpha) and 3 UreAB (gamma/beta) subunits. May also form a heterotrimer of UreA (gamma), UreB (beta) and UreC (alpha) subunits. Three heterotrimers associate to form the active enzyme. It depends on Ni cation as a cofactor. Post-translationally, carboxylation allows a single lysine to coordinate two nickel ions.

The protein localises to the cytoplasm. It carries out the reaction urea + 2 H2O + H(+) = hydrogencarbonate + 2 NH4(+). It functions in the pathway nitrogen metabolism; urea degradation; CO(2) and NH(3) from urea (urease route): step 1/1. This chain is Urease subunit alpha 1, found in Streptomyces coelicolor (strain ATCC BAA-471 / A3(2) / M145).